A 345-amino-acid chain; its full sequence is Probable 3'(2'),5'-bisphosphate nucleotidase 4 (345 aa).

Catalysis depends on aspartate 46, which acts as the Proton acceptor. Residues glutamate 71, aspartate 134, valine 136, and aspartate 137 each coordinate Mg(2+). Residue threonine 139 is the Proton acceptor of the active site. Positions 139, 247, 250, and 264 each coordinate adenosine 3',5'-bisphosphate. Serine 247, lysine 250, and arginine 264 together coordinate AMP.

The protein belongs to the inositol monophosphatase superfamily. The cofactor is Mg(2+).

The catalysed reaction is 3'-phosphoadenylyl sulfate + H2O = adenosine 5'-phosphosulfate + phosphate. The enzyme catalyses adenosine 3',5'-bisphosphate + H2O = AMP + phosphate. It carries out the reaction adenosine 2',5'-bisphosphate + H2O = AMP + phosphate. It catalyses the reaction 1D-myo-inositol 1,4-bisphosphate + H2O = 1D-myo-inositol 4-phosphate + phosphate. The catalysed reaction is 1D-myo-inositol 1,3,4-trisphosphate + H2O = 1D-myo-inositol 3,4-bisphosphate + phosphate. The protein operates within signal transduction; phosphatidylinositol signaling pathway. Functionally, phosphatase that converts adenosine 3'-phosphate 5'-phosphosulfate (PAPS) to adenosine 5'-phosphosulfate (APS) and 3'(2')-phosphoadenosine 5'-phosphate (PAP) to AMP. Is also able to hydrolyze inositol 1,4-bisphosphate and inositol 1,3,4-trisphosphate. This chain is Probable 3'(2'),5'-bisphosphate nucleotidase 4 (SAL4), found in Arabidopsis thaliana (Mouse-ear cress).